Consider the following 486-residue polypeptide: Cardiolipin synthase A (486 aa).

2 helical membrane-spanning segments follow: residues 3–23 (TVYTLVSWLAILGYWLLIAGV) and 38–58 (MAWLLIIYILPLVGIIAYLAV). PLD phosphodiesterase domains lie at 219-246 (MDLRQHRKMIMIDNYIAYTGSMNMVDPR) and 399-426 (EGGLLHTKSVLVDGELSLVGTVNLDMRS). Catalysis depends on residues H224, K226, D231, H404, K406, and D411.

This sequence belongs to the phospholipase D family. Cardiolipin synthase subfamily. ClsA sub-subfamily.

The protein localises to the cell inner membrane. It catalyses the reaction 2 a 1,2-diacyl-sn-glycero-3-phospho-(1'-sn-glycerol) = a cardiolipin + glycerol. Its function is as follows. Catalyzes the reversible phosphatidyl group transfer from one phosphatidylglycerol molecule to another to form cardiolipin (CL) (diphosphatidylglycerol) and glycerol. The chain is Cardiolipin synthase A from Escherichia coli O157:H7 (strain EC4115 / EHEC).